The chain runs to 185 residues: Peptide deformylase (185 aa).

The Fe cation site is built by Cys-109 and His-152. Glu-153 is an active-site residue. His-156 serves as a coordination point for Fe cation.

It belongs to the polypeptide deformylase family. Fe(2+) is required as a cofactor.

It catalyses the reaction N-terminal N-formyl-L-methionyl-[peptide] + H2O = N-terminal L-methionyl-[peptide] + formate. Removes the formyl group from the N-terminal Met of newly synthesized proteins. Requires at least a dipeptide for an efficient rate of reaction. N-terminal L-methionine is a prerequisite for activity but the enzyme has broad specificity at other positions. The protein is Peptide deformylase of Roseiflexus castenholzii (strain DSM 13941 / HLO8).